Reading from the N-terminus, the 251-residue chain is uncharacterized protein (251 aa).

This is an uncharacterized protein from Methanocaldococcus jannaschii (strain ATCC 43067 / DSM 2661 / JAL-1 / JCM 10045 / NBRC 100440) (Methanococcus jannaschii).